Reading from the N-terminus, the 386-residue chain is SWI/SNF-related matrix-associated actin-dependent regulator of chromatin subfamily B member 1 (386 aa).

Residues M1–S114 are DNA-binding.

This sequence belongs to the SNF5 family. In terms of assembly, component of the multiprotein chromatin-remodeling complexes SWI/SNF. Component of neural progenitors-specific chromatin remodeling complex (npBAF complex) and the neuron-specific chromatin remodeling complex (nBAF complex). Component of the BAF (SWI/SNF) chromatin remodeling complex. Component of the SWI/SNF-B (PBAF) chromatin remodeling complex. Binds to double-stranded DNA.

It is found in the nucleus. Its function is as follows. Involved in chromatin-remodeling. Core component of the BAF (SWI/SNF) complex. This ATP-dependent chromatin-remodeling complex plays important roles in cell proliferation and differentiation, in cellular antiviral activities and inhibition of tumor formation. Belongs to the neural progenitors-specific chromatin remodeling complex (npBAF complex) and the neuron-specific chromatin remodeling complex (nBAF complex) and may play a role in neural development. In Gallus gallus (Chicken), this protein is SWI/SNF-related matrix-associated actin-dependent regulator of chromatin subfamily B member 1 (SMARCB1).